A 163-amino-acid chain; its full sequence is uncharacterized protein (163 aa).

4Fe-4S ferredoxin-type domains follow at residues 30–59 (REII…YSSD), 61–90 (LYIT…IIRL), 105–136 (KYEF…EYGS), and 136–163 (SKIR…IILR). 16 residues coordinate [4Fe-4S] cluster: cysteine 39, cysteine 42, cysteine 45, cysteine 49, cysteine 70, cysteine 73, cysteine 76, cysteine 80, cysteine 116, cysteine 119, cysteine 122, cysteine 126, cysteine 145, cysteine 148, cysteine 151, and cysteine 155.

This is an uncharacterized protein from Methanocaldococcus jannaschii (strain ATCC 43067 / DSM 2661 / JAL-1 / JCM 10045 / NBRC 100440) (Methanococcus jannaschii).